A 198-amino-acid chain; its full sequence is uncharacterized protein (198 aa).

The protein resides in the cytoplasm. This is an uncharacterized protein from Saccharomyces cerevisiae (strain ATCC 204508 / S288c) (Baker's yeast).